The following is a 228-amino-acid chain: Tungstate uptake system permease protein TupB (228 aa).

5 helical membrane-spanning segments follow: residues 25–45, 65–85, 102–122, 144–164, and 203–223; these read IIFL…AVSI, VLYS…AIGL, AMII…TYSL, VIIL…VTTF, and MAIA…AVIY. Residues 26-222 form the ABC transmembrane type-1 domain; sequence IFLSVFVSST…MISFAINAVI (197 aa).

This sequence belongs to the binding-protein-dependent transport system permease family. In terms of assembly, the complex is composed of two ATP-binding proteins (TupC), two transmembrane proteins (TupB) and a solute-binding protein (TupA).

It localises to the cell membrane. Its function is as follows. Part of an ABC transporter complex involved in tungstate uptake. Probably responsible for the translocation of the substrate across the membrane. This Peptoclostridium acidaminophilum (Eubacterium acidaminophilum) protein is Tungstate uptake system permease protein TupB.